Consider the following 125-residue polypeptide: Lymphocyte antigen 6 complex locus protein G6c (125 aa).

The N-terminal stretch at 1–18 is a signal peptide; that stretch reads MRALLLLSLSALLCWVSA. Residues 20–111 enclose the UPAR/Ly6 domain; that stretch reads IRCHSCYKLP…PRPTPALTLV (92 aa). Cystine bridges form between Cys-22–Cys-47, Cys-25–Cys-33, and Cys-39–Cys-65. An N-linked (GlcNAc...) asparagine glycan is attached at Asn-88. Cys-92 and Cys-97 are joined by a disulfide. A lipid anchor (GPI-anchor amidated serine) is attached at Ser-99. Residues 100 to 125 constitute a propeptide, removed in mature form; it reads PAPRPTPALTLVFLTSLAGLGLWLLH.

In terms of processing, N-glycosylated.

It localises to the cell membrane. The polypeptide is Lymphocyte antigen 6 complex locus protein G6c (LY6G6C) (Bos taurus (Bovine)).